The chain runs to 124 residues: Acidic phospholipase A2 (124 aa).

7 disulfide bridges follow: C26/C116, C28/C44, C43/C95, C49/C124, C50/C88, C57/C81, and C75/C86. Ca(2+) is bound by residues Y27, G29, and G31. H47 is an active-site residue. D48 lines the Ca(2+) pocket. Residue D89 is part of the active site.

This sequence belongs to the phospholipase A2 family. Group II subfamily. D49 sub-subfamily. Requires Ca(2+) as cofactor. Expressed by the venom gland.

It localises to the secreted. It carries out the reaction a 1,2-diacyl-sn-glycero-3-phosphocholine + H2O = a 1-acyl-sn-glycero-3-phosphocholine + a fatty acid + H(+). In terms of biological role, snake venom phospholipase A2 (PLA2) that inhibits ADP-induced platelet aggregation. PLA2 catalyzes the calcium-dependent hydrolysis of the 2-acyl groups in 3-sn-phosphoglycerides. In Gloydius ussuriensis (Ussuri mamushi), this protein is Acidic phospholipase A2.